The primary structure comprises 151 residues: Ubiquitin-conjugating enzyme E2 2 (151 aa).

Positions 1-26 (MSTSARRRLMRDFKRMQTDPPAGVSA) are disordered. Positions 4 to 150 (SARRRLMRDF…VRETVEKSWE (147 aa)) constitute a UBC core domain. C88 acts as the Glycyl thioester intermediate in catalysis.

The protein belongs to the ubiquitin-conjugating enzyme family.

It localises to the cytoplasm. It is found in the nucleus. It carries out the reaction S-ubiquitinyl-[E1 ubiquitin-activating enzyme]-L-cysteine + [E2 ubiquitin-conjugating enzyme]-L-cysteine = [E1 ubiquitin-activating enzyme]-L-cysteine + S-ubiquitinyl-[E2 ubiquitin-conjugating enzyme]-L-cysteine.. It functions in the pathway protein modification; protein ubiquitination. Its function is as follows. Catalyzes the covalent attachment of ubiquitin to other proteins. Plays a role in transcription regulation by catalyzing the monoubiquitination of histone H2B to form H2BK123ub1. H2BK123ub1 gives a specific tag for epigenetic transcriptional activation and is also a prerequisite for H3K4me and H3K79me formation. Also involved in postreplication repair of UV-damaged DNA, in N-end rule-dependent protein degradation and in sporulation. The sequence is that of Ubiquitin-conjugating enzyme E2 2 (uvsJ) from Emericella nidulans (strain FGSC A4 / ATCC 38163 / CBS 112.46 / NRRL 194 / M139) (Aspergillus nidulans).